The following is a 138-amino-acid chain: Mediator of RNA polymerase II transcription subunit 19 (138 aa).

This sequence belongs to the Mediator complex subunit 19 family. Component of the Mediator complex.

It is found in the nucleus. Its function is as follows. Component of the Mediator complex, a coactivator involved in the regulated transcription of nearly all RNA polymerase II-dependent genes. Mediator functions as a bridge to convey information from gene-specific regulatory proteins to the basal RNA polymerase II transcription machinery. Mediator is recruited to promoters by direct interactions with regulatory proteins and serves as a scaffold for the assembly of a functional preinitiation complex with RNA polymerase II and the general transcription factors. The sequence is that of Mediator of RNA polymerase II transcription subunit 19 (med19) from Schizosaccharomyces pombe (strain 972 / ATCC 24843) (Fission yeast).